Consider the following 391-residue polypeptide: UPF0229 protein CA_C0580 (391 aa).

Disordered stretches follow at residues 1–20 and 75–109; these read MAIF…TIGD and VGSG…NSEG. A compositionally biased stretch (gly residues) spans 96-106; that stretch reads GSKGKGKGAGN.

It belongs to the UPF0229 family.

In Clostridium acetobutylicum (strain ATCC 824 / DSM 792 / JCM 1419 / IAM 19013 / LMG 5710 / NBRC 13948 / NRRL B-527 / VKM B-1787 / 2291 / W), this protein is UPF0229 protein CA_C0580.